We begin with the raw amino-acid sequence, 362 residues long: Probable peptidyl-prolyl cis-trans isomerase C27F1.06c (362 aa).

Ser69 carries the post-translational modification Phosphoserine. The disordered stretch occupies residues 144-274 (DEFSSDEEEM…KVKGDGPAAK (131 aa)). Acidic residues-rich tracts occupy residues 146–167 (FSSDEEEMDDISVTSSEEEEEE) and 175–189 (LNSDEEDAEQAEEEI). Ser177 bears the Phosphoserine mark. A compositionally biased stretch (basic and acidic residues) spans 190-218 (LEKPVPKDEVAEKHSKDKLKKEEKEKKTA). A PPIase FKBP-type domain is found at 276-362 (KKRVSMRYIG…VFDVKLLAVN (87 aa)).

The protein belongs to the FKBP-type PPIase family. FKBP3/4 subfamily.

The catalysed reaction is [protein]-peptidylproline (omega=180) = [protein]-peptidylproline (omega=0). Functionally, PPIases accelerate the folding of proteins. It catalyzes the cis-trans isomerization of proline imidic peptide bonds in oligopeptides. This Schizosaccharomyces pombe (strain 972 / ATCC 24843) (Fission yeast) protein is Probable peptidyl-prolyl cis-trans isomerase C27F1.06c.